Reading from the N-terminus, the 536-residue chain is MVKAVSSSKGAAKVEQKKSAARSGVKKNASKSQASLQDTSSPLKTSSKNAHAKKDVQAKGAVGEIKQVIGAVVDVQFEGALPNILNALETENLGNRLVLEVAQHLGENTVRTIAMDTTDGLTRGQKVFDTETQICVPVGEATLGRIMNVIGEPVDNVGPIATTKTRSIHQKAPEYVDQSTASEILVTGIKVVDLLAPYSKGGKVGLFGGAGVGKTVLIMELINNIAKAHGGYSVFAGVGERTREGNDLYYEMIESRVNVNPKDNNGSTKGSKCALVYGQMNEPPGARARVALSGLTIAESFRDEGQDVLFFVDNIFRFTQAGAEVSALLGRIPSAVGYQPTLATDMGALQERITSTKTGSITSVQAIYVPADDLTDPAPATSFAHLDATTVLSRSIAEKGIYPAVDPLDSFSRMLDPLVVGEEHYTVACQVQTILQRYRSLQDIIAILGMDELSEEDKLLVGRARKIERFLSQPFHVAETFTGSPGKLVPLEETIKGFKGLCAGDYDDLPEAAFYMVGSIDEALEKGKRLIAEAAS.

Residues 1–57 (MVKAVSSSKGAAKVEQKKSAARSGVKKNASKSQASLQDTSSPLKTSSKNAHAKKDVQ) form a disordered region. A compositionally biased stretch (polar residues) spans 30-49 (SKSQASLQDTSSPLKTSSKN). 208–215 (GGAGVGKT) contributes to the ATP binding site.

This sequence belongs to the ATPase alpha/beta chains family. In terms of assembly, F-type ATPases have 2 components, CF(1) - the catalytic core - and CF(0) - the membrane proton channel. CF(1) has five subunits: alpha(3), beta(3), gamma(1), delta(1), epsilon(1). CF(0) has three main subunits: a(1), b(2) and c(9-12). The alpha and beta chains form an alternating ring which encloses part of the gamma chain. CF(1) is attached to CF(0) by a central stalk formed by the gamma and epsilon chains, while a peripheral stalk is formed by the delta and b chains.

The protein localises to the cell inner membrane. The enzyme catalyses ATP + H2O + 4 H(+)(in) = ADP + phosphate + 5 H(+)(out). Produces ATP from ADP in the presence of a proton gradient across the membrane. The catalytic sites are hosted primarily by the beta subunits. The polypeptide is ATP synthase subunit beta (Bartonella quintana (strain Toulouse) (Rochalimaea quintana)).